We begin with the raw amino-acid sequence, 498 residues long: Transcription factor kayak (498 aa).

The segment covering 108–127 (ASLGQGSESEDSNASYNDTQ) has biased composition (polar residues). Disordered regions lie at residues 108–144 (ASLGQGSESEDSNASYNDTQMNEEQDTTDTSSAHTDS) and 177–234 (GSAS…KRRV). Composition is skewed to low complexity over residues 135–144 (TDTSSAHTDS) and 177–191 (GSASVGSSNANTSNT). A bZIP domain is found at 212-275 (EQKRAVRRER…KQLEYLLATH (64 aa)). Residues 214–233 (KRAVRRERNKQAAARCRKRR) form a basic motif region. Residues 240–247 (LTEEVEQL) are leucine-zipper. The segment covering 304–325 (AGSSGSGASSHHNHNSNDSSNG) has biased composition (low complexity). 2 disordered regions span residues 304–345 (AGSS…SPLD) and 465–498 (TPVSGPLVPNSSSTNKHPLELPTPTAEPSKLVSL). The span at 333–343 (TLNSTGRSNSP) shows a compositional bias: polar residues. Serine 342 carries the phosphoserine modification.

This sequence belongs to the bZIP family. Fos subfamily. In terms of assembly, homodimer. Heterodimer with Jra. The kay-Jra heterodimer binds more stably to the AP-1 site than either of the two proteins alone.

It is found in the nucleus. In terms of biological role, developmentally regulated transcription factor AP-1 binds and recognizes the enhancer DNA sequence: 5'-TGA[CG]TCA-3'. May play a role in the function or determination of a particular subset of cells in the developing embryo. It is able to carry out its function either independently of or in conjunction with Jra. This chain is Transcription factor kayak, found in Drosophila simulans (Fruit fly).